An 80-amino-acid polypeptide reads, in one-letter code: D-alanyl carrier protein 1 (80 aa).

The Carrier domain occupies M1–Q80. Position 38 is an O-(pantetheine 4'-phosphoryl)serine (S38).

This sequence belongs to the DltC family. 4'-phosphopantetheine is transferred from CoA to a specific serine of apo-DCP.

Its subcellular location is the cytoplasm. The protein operates within cell wall biogenesis; lipoteichoic acid biosynthesis. Functionally, carrier protein involved in the D-alanylation of lipoteichoic acid (LTA). The loading of thioester-linked D-alanine onto DltC is catalyzed by D-alanine--D-alanyl carrier protein ligase DltA. The DltC-carried D-alanyl group is further transferred to cell membrane phosphatidylglycerol (PG) by forming an ester bond, probably catalyzed by DltD. D-alanylation of LTA plays an important role in modulating the properties of the cell wall in Gram-positive bacteria, influencing the net charge of the cell wall. In Lactiplantibacillus plantarum (strain ATCC BAA-793 / NCIMB 8826 / WCFS1) (Lactobacillus plantarum), this protein is D-alanyl carrier protein 1.